The chain runs to 97 residues: UPF0235 protein PFL_5841 (97 aa).

This sequence belongs to the UPF0235 family.

The sequence is that of UPF0235 protein PFL_5841 from Pseudomonas fluorescens (strain ATCC BAA-477 / NRRL B-23932 / Pf-5).